The chain runs to 481 residues: Squalene epoxidase erg1 (481 aa).

Residues 28 to 48 (HADVVIIGAGVLGCALAVALG) traverse the membrane as a helical segment. FAD contacts are provided by residues 38 to 39 (VL), 58 to 59 (EA), Arg66, and Arg138. Asn146 is a glycosylation site (N-linked (GlcNAc...) asparagine). Asp319 and Met332 together coordinate FAD. The next 2 helical transmembrane spans lie at 425-445 (KPSV…WVLL) and 452-472 (LFPV…VVIF).

It belongs to the squalene monooxygenase family. FAD is required as a cofactor.

The protein resides in the endoplasmic reticulum membrane. Its subcellular location is the microsome membrane. It catalyses the reaction squalene + reduced [NADPH--hemoprotein reductase] + O2 = (S)-2,3-epoxysqualene + oxidized [NADPH--hemoprotein reductase] + H2O + H(+). It functions in the pathway steroid metabolism; ergosterol biosynthesis. Functionally, squalene epoxidase; part of the third module of ergosterol biosynthesis pathway that includes the late steps of the pathway. Erg1 catalyzes the epoxidation of squalene into 2,3-epoxysqualene. The third module or late pathway involves the ergosterol synthesis itself through consecutive reactions that mainly occur in the endoplasmic reticulum (ER) membrane. Firstly, the squalene synthase erg9 catalyzes the condensation of 2 farnesyl pyrophosphate moieties to form squalene, which is the precursor of all steroids. Squalene synthase is crucial for balancing the incorporation of farnesyl diphosphate (FPP) into sterol and nonsterol isoprene synthesis. Secondly, squalene is converted into lanosterol by the consecutive action of the squalene epoxidase erg1 and the lanosterol synthase erg7. Then, the delta(24)-sterol C-methyltransferase erg6 methylates lanosterol at C-24 to produce eburicol. Eburicol is the substrate of the sterol 14-alpha demethylase encoded by cyp51A and cyp51B, to yield 4,4,24-trimethyl ergosta-8,14,24(28)-trienol. The C-14 reductase erg24 then reduces the C14=C15 double bond which leads to 4,4-dimethylfecosterol. A sequence of further demethylations at C-4, involving the C-4 demethylation complex containing the C-4 methylsterol oxidases erg25A or erg25B, the sterol-4-alpha-carboxylate 3-dehydrogenase erg26 and the 3-keto-steroid reductase erg27, leads to the production of fecosterol via 4-methylfecosterol. The C-8 sterol isomerase erg2 then catalyzes the reaction which results in unsaturation at C-7 in the B ring of sterols and thus converts fecosterol to episterol. The sterol-C5-desaturase erg3B then catalyzes the introduction of a C-5 double bond in the B ring to produce 5-dehydroepisterol. The 2 other sterol-C5-desaturases, erg3A and erg3C, seem to be less important in ergosterol biosynthesis. The C-22 sterol desaturase erg5 further converts 5-dehydroepisterol into ergosta-5,7,22,24(28)-tetraen-3beta-ol by forming the C-22(23) double bond in the sterol side chain. Finally, ergosta-5,7,22,24(28)-tetraen-3beta-ol is substrate of the C-24(28) sterol reductases erg4A and erg4B to produce ergosterol. Possible alternative sterol biosynthetic pathways might exist from fecosterol to ergosterol, depending on the activities of the erg3 isoforms. The polypeptide is Squalene epoxidase erg1 (Aspergillus fumigatus (strain ATCC MYA-4609 / CBS 101355 / FGSC A1100 / Af293) (Neosartorya fumigata)).